The chain runs to 217 residues: 3,4-dihydroxy-2-butanone 4-phosphate synthase (217 aa).

D-ribulose 5-phosphate is bound by residues 37 to 38, aspartate 42, 150 to 154, and glutamate 174; these read RE and RRGHT. A Mg(2+)-binding site is contributed by glutamate 38. Residue histidine 153 coordinates Mg(2+).

Belongs to the DHBP synthase family. In terms of assembly, homodimer. Mg(2+) serves as cofactor. Requires Mn(2+) as cofactor.

It catalyses the reaction D-ribulose 5-phosphate = (2S)-2-hydroxy-3-oxobutyl phosphate + formate + H(+). Its pathway is cofactor biosynthesis; riboflavin biosynthesis; 2-hydroxy-3-oxobutyl phosphate from D-ribulose 5-phosphate: step 1/1. In terms of biological role, catalyzes the conversion of D-ribulose 5-phosphate to formate and 3,4-dihydroxy-2-butanone 4-phosphate. The chain is 3,4-dihydroxy-2-butanone 4-phosphate synthase from Shewanella baltica (strain OS223).